The sequence spans 480 residues: Pre-glycoprotein polyprotein GP complex (480 aa).

Glycine 2 carries the N-myristoyl glycine; by host lipid modification. Topologically, residues 2 to 17 (GQLVSFFQEIPVFFQE) are extracellular. A helical membrane pass occupies residues 18–33 (ALNIALAVVTLLAIVK). Residues 34–58 (GVLNLWKSGLFQLLMFLILAGRSCS) lie on the Cytoplasmic side of the membrane. Zn(2+) is bound at residue cysteine 57. Residues 59–419 (FRIGYHTSFE…QGRTPLTLVD (361 aa)) are Extracellular-facing. 4 disulfide bridges follow: cysteine 85/cysteine 221, cysteine 266/cysteine 279, cysteine 288/cysteine 297, and cysteine 351/cysteine 372. Asparagine 88, asparagine 174, and asparagine 214 each carry an N-linked (GlcNAc...) asparagine; by host glycan. Residues asparagine 352, asparagine 360, asparagine 377, and asparagine 382 are each glycosylated (N-linked (GlcNAc...) asparagine; by host). Residues 420–440 (LCFWSAVFYTTTLFLHLVGFP) form a helical membrane-spanning segment. Over 441 to 480 (THRHISGEPCPLPHRLNRHGACNCGRFKRLKKPLVWYKHH) the chain is Cytoplasmic. The Zn(2+) site is built by histidine 442, histidine 444, cysteine 450, histidine 454, cysteine 462, cysteine 464, and histidine 480.

This sequence belongs to the arenaviridae GPC protein family. As to quaternary structure, interacts with glycoprotein G2. Part of the GP complex (GP-C) together with glycoprotein G1 and glycoprotein G2. The GP-complex interacts with protein Z, which interacts with ribonucleocapsid; these interactions may induce virion budding. In terms of assembly, homotrimer; disulfide-linked. In pre-fusion state, G1 homotrimers bind G2 homotrimers via ionic interactions. Part of the GP complex (GP-C) together with glycoprotein G2 and the stable signal peptide. The GP-complex interacts with protein Z, which interacts with ribonucleocapsid; these interactions may induce virion budding. Homotrimer. Interacts with the stable signal peptide. In pre-fusion state, G2 homotrimers bind G1 homotrimers via ionic interactions. Part of the GP complex (GP-C) together with glycoprotein G1 and the stable signal peptide. Acidification in the endosome triggers rearrangements, which ultimately leads to a 6 helix bundle formed by the two heptad repeat domains (HR1 and HR2) in post-fusion state. The GP-complex interacts with protein Z, which interacts with ribonucleocapsid; these interactions may induce virion budding. Post-translationally, specific enzymatic cleavages in vivo yield mature proteins. GP-C polyprotein is cleaved in the endoplasmic reticulum by the host protease MBTPS1. Only cleaved glycoprotein is incorporated into virions. In terms of processing, the SSP remains stably associated with the GP complex following cleavage by signal peptidase and plays crucial roles in the trafficking of GP through the secretory pathway. Myristoylation is necessary for GP2-mediated fusion activity.

It localises to the virion membrane. It is found in the host endoplasmic reticulum membrane. Its subcellular location is the host Golgi apparatus membrane. The protein localises to the host cell membrane. In terms of biological role, functions as a cleaved signal peptide that is retained as the third component of the GP complex (GP-C). Helps to stabilize the spike complex in its native conformation. The SSP is required for efficient glycoprotein expression, post-translational maturation cleavage of G1 and G2, glycoprotein transport to the cell surface plasma membrane, formation of infectious virus particles, and acid pH-dependent glycoprotein-mediated cell fusion. Its function is as follows. Forms the virion spikes together with glycoprotein G2. The glycoprotein spike trimers are connected to the underlying matrix. Interacts with the host receptor leading to virus endocytosis. Functionally, forms the virion spikes together with glycoprotein G1. The glycoprotein spike trimers are connected to the underlying matrix. Class I viral fusion protein that directs fusion of viral and host endosomal membranes, leading to delivery of the nucleocapsid into the cytoplasm. Membrane fusion is mediated by irreversible conformational changes induced by acidification. In Cupixi mammarenavirus (isolate Rat/Brasil/BeAn 119303/1970) (CPXV), this protein is Pre-glycoprotein polyprotein GP complex.